Here is a 140-residue protein sequence, read N- to C-terminus: Methylglyoxal synthase (140 aa).

An MGS-like domain is found at 1–140 (MKIALIAHDR…HDQDSNPINL (140 aa)). Substrate-binding positions include His8, Lys12, 34–37 (TGTT), and 54–55 (SG). Asp60 functions as the Proton donor/acceptor in the catalytic mechanism. His87 is a substrate binding site.

It belongs to the methylglyoxal synthase family.

It carries out the reaction dihydroxyacetone phosphate = methylglyoxal + phosphate. Functionally, catalyzes the formation of methylglyoxal from dihydroxyacetone phosphate. The sequence is that of Methylglyoxal synthase from Latilactobacillus sakei subsp. sakei (strain 23K) (Lactobacillus sakei subsp. sakei).